The following is a 447-amino-acid chain: N-succinylarginine dihydrolase (447 aa).

Residues 19–28, asparagine 110, and 137–138 contribute to the substrate site; these read AGLSFGNEAS and HR. Glutamate 174 is an active-site residue. Arginine 212 is a binding site for substrate. Residue histidine 248 is part of the active site. Positions 250 and 359 each coordinate substrate. The Nucleophile role is filled by cysteine 365.

This sequence belongs to the succinylarginine dihydrolase family. As to quaternary structure, homodimer.

The catalysed reaction is N(2)-succinyl-L-arginine + 2 H2O + 2 H(+) = N(2)-succinyl-L-ornithine + 2 NH4(+) + CO2. It functions in the pathway amino-acid degradation; L-arginine degradation via AST pathway; L-glutamate and succinate from L-arginine: step 2/5. Its function is as follows. Catalyzes the hydrolysis of N(2)-succinylarginine into N(2)-succinylornithine, ammonia and CO(2). The protein is N-succinylarginine dihydrolase of Escherichia coli (strain K12 / MC4100 / BW2952).